The sequence spans 113 residues: Non-structural protein 1 (113 aa).

The protein belongs to the pneumovirus non-structural protein 1 family.

Its subcellular location is the host cytoplasm. It is found in the host mitochondrion. May play a minor role in antagonizing the type I IFN-mediated antiviral response. Additionally, NS1 may serve some inhibitory role in viral transcription and RNA replication. This chain is Non-structural protein 1 (1C), found in Mus musculus (Mouse).